The primary structure comprises 1100 residues: MASRARSEPPLEHRFYGGAESHAGHSSLVLTLFVVMLMTCLEAAKLTVGFHAPWNISHPFSVQRLGAGLQIAVDKLNSEPVGPGNLSWEFTYTNATCNAKESLAAFIDQVQREHISVLIGPACPEAAEVIGLLASEWDIPLFDFVGQMTALEDHFWCDTCVTLVPPKQEIGTVLRESLQYLGWEYIGVFGGSSAGSSWGEVNELWKAVEDELQLHFTITARVRYSSGHSDLLQEGLRSMSSVARVIILICSSEDAKHILQAAEDLGLNSGEFVFLLLQQLEDSFWKEVLAEDKVTRFPKVYESVFLIAPSTYGGSAGDDDFRKQVYQRLRRPPFQSSISSEDQVSPYSAYLHDALLLYAQTVEEMMKAEKDFRDGRQLISTLRADQVTLQGITGPVLLDAQGKRHMDYSVYALQKSGNGSRFLPFLHYDSFQKVIRPWRDDLNASGPHGSHPEYKPDCGFHEDLCRTKPPTGAGMTASVTAVIPTVTLLVVASAAAITGLMLWRLRGKVQNHPGDTWWQIHYDSITLLPQHKPSHRGTPMSRCNVSNASTVKISADCGSFAKTHQDEELFYAPVGLYQGNHVALCYIGEEAEARIKKPTVLREVWLMCELKHENIVPFFGVCTEPPNICIVTQYCKKGSLKDVLRNSDHEMDWIFKLSFVYDIVNGMLFLHGSPLRSHGNLKPSNCLVDSHMQLKLAGFGLWEFKHGSTCRIYNQEATDHSELYWTAPELLRLRELPWSGTPQGDVYSFAILLRDLIHQQAHGPFEDLEAAPEEIISCIKDPRAPVPLRPSLLEDKGDERIVALVRACWAESPEQRPAFPSIKKTLREASPRGRVSILDSMMGKLEMYASHLEEVVEERTCQLVAEKRKVEKLLSTMLPSFVGEQLIAGKSVEPEHFESVTIFFSDIVGFTKLCSLSSPLQVVKLLNDLYSLFDHTIQTHDVYKVETIGDAYMVASGLPIRNGAQHADEIATMSLHLLSVTTNFQIGHMPEERLKLRIGLHTGPVVAGVVGITMPRYCLFGDTVNMASRMESSSLPLRIHVSQSTARALLVAGGYHLQKRGTISVKGKGEQTTFWLTGKDGFAVPLPEFTEEEAKVPEIL.

The signal sequence occupies residues 1-43 (MASRARSEPPLEHRFYGGAESHAGHSSLVLTLFVVMLMTCLEA). The Extracellular segment spans residues 44 to 481 (AKLTVGFHAP…GAGMTASVTA (438 aa)). N-linked (GlcNAc...) asparagine glycans are attached at residues N55, N85, N94, N418, and N443. Residues 482 to 502 (VIPTVTLLVVASAAAITGLML) traverse the membrane as a helical segment. The Cytoplasmic segment spans residues 503-1100 (WRLRGKVQNH…EEEAKVPEIL (598 aa)). Residues 549-826 (STVKISADCG…PAFPSIKKTL (278 aa)) enclose the Protein kinase domain. Residues 901 to 1031 (TIFFSDIVGF…DTVNMASRME (131 aa)) enclose the Guanylate cyclase domain.

Belongs to the adenylyl cyclase class-4/guanylyl cyclase family. In terms of assembly, homooligomer. May interact with NPR1/GC-A. In terms of processing, N-glycosylated. Expressed in lung, kidney and skeletal muscle. Low levels in intestine.

Its subcellular location is the cell membrane. The protein resides in the cytoplasm. The catalysed reaction is GTP = 3',5'-cyclic GMP + diphosphate. The chain is Guanylate cyclase 2G (Gucy2g) from Rattus norvegicus (Rat).